Here is a 93-residue protein sequence, read N- to C-terminus: Small ribosomal subunit protein uS19 (93 aa).

The protein belongs to the universal ribosomal protein uS19 family.

Its function is as follows. Protein S19 forms a complex with S13 that binds strongly to the 16S ribosomal RNA. The polypeptide is Small ribosomal subunit protein uS19 (Agathobacter rectalis (strain ATCC 33656 / DSM 3377 / JCM 17463 / KCTC 5835 / VPI 0990) (Eubacterium rectale)).